A 341-amino-acid chain; its full sequence is NADH-quinone oxidoreductase subunit H 1 (341 aa).

Transmembrane regions (helical) follow at residues 13-33 (LVVI…IAYI), 82-102 (GVFL…WAVI), 115-135 (VGVL…IMAG), 161-181 (IGFV…TAIV), 190-210 (LLGW…VSAL), 248-268 (YVAI…GWLP), 277-297 (WVPG…LFAM), and 317-337 (VFLP…QFAG).

Belongs to the complex I subunit 1 family. As to quaternary structure, NDH-1 is composed of 14 different subunits. Subunits NuoA, H, J, K, L, M, N constitute the membrane sector of the complex.

The protein resides in the cell inner membrane. It catalyses the reaction a quinone + NADH + 5 H(+)(in) = a quinol + NAD(+) + 4 H(+)(out). NDH-1 shuttles electrons from NADH, via FMN and iron-sulfur (Fe-S) centers, to quinones in the respiratory chain. The immediate electron acceptor for the enzyme in this species is believed to be ubiquinone. Couples the redox reaction to proton translocation (for every two electrons transferred, four hydrogen ions are translocated across the cytoplasmic membrane), and thus conserves the redox energy in a proton gradient. This subunit may bind ubiquinone. The protein is NADH-quinone oxidoreductase subunit H 1 of Rhodopseudomonas palustris (strain BisB18).